Reading from the N-terminus, the 314-residue chain is DNA-directed RNA polymerase subunit alpha (314 aa).

Residues 1-228 (MIEIEKPKIE…EHLNIFVGLT (228 aa)) form an alpha N-terminal domain (alpha-NTD) region. The interval 245–314 (KEKVLEMTIE…ELGLGLRKDD (70 aa)) is alpha C-terminal domain (alpha-CTD).

It belongs to the RNA polymerase alpha chain family. In terms of assembly, homodimer. The RNAP catalytic core consists of 2 alpha, 1 beta, 1 beta' and 1 omega subunit. When a sigma factor is associated with the core the holoenzyme is formed, which can initiate transcription.

The enzyme catalyses RNA(n) + a ribonucleoside 5'-triphosphate = RNA(n+1) + diphosphate. DNA-dependent RNA polymerase catalyzes the transcription of DNA into RNA using the four ribonucleoside triphosphates as substrates. This is DNA-directed RNA polymerase subunit alpha from Bacillus licheniformis (strain ATCC 14580 / DSM 13 / JCM 2505 / CCUG 7422 / NBRC 12200 / NCIMB 9375 / NCTC 10341 / NRRL NRS-1264 / Gibson 46).